Here is an 88-residue protein sequence, read N- to C-terminus: Small ribosomal subunit protein bS20 (88 aa).

Belongs to the bacterial ribosomal protein bS20 family.

In terms of biological role, binds directly to 16S ribosomal RNA. This chain is Small ribosomal subunit protein bS20, found in Heliobacterium modesticaldum (strain ATCC 51547 / Ice1).